The chain runs to 233 residues: Synaptogyrin-1 (233 aa).

The residue at position 1 (Met1) is an N-acetylmethionine. Residues Met1–Gln23 are Cytoplasmic-facing. Residues Leu20–Gln173 enclose the MARVEL domain. The helical transmembrane segment at Pro24–Val44 threads the bilayer. The Lumenal portion of the chain corresponds to Asn45–Gly71. Residues Val72–Phe92 form a helical membrane-spanning segment. The Cytoplasmic portion of the chain corresponds to Pro93 to Lys103. The helical transmembrane segment at Ala104–Cys124 threads the bilayer. The Lumenal portion of the chain corresponds to Tyr125–Arg148. The chain crosses the membrane as a helical span at residues Ala149–Phe169. Residues Gln170 to Tyr233 lie on the Cytoplasmic side of the membrane. The interval Met194–Tyr233 is disordered. Residues Thr213–Tyr233 show a composition bias toward polar residues.

This sequence belongs to the synaptogyrin family.

The protein localises to the cytoplasmic vesicle. It is found in the secretory vesicle. It localises to the synaptic vesicle membrane. Its subcellular location is the melanosome. Functionally, may play a role in regulated exocytosis. Modulates the localization of synaptophysin/SYP into synaptic-like microvesicles and may therefore play a role in synaptic-like microvesicle formation and/or maturation. Involved in the regulation of short-term and long-term synaptic plasticity. The protein is Synaptogyrin-1 of Homo sapiens (Human).